Here is a 495-residue protein sequence, read N- to C-terminus: Probable cytosol aminopeptidase (495 aa).

Residues lysine 264 and aspartate 269 each contribute to the Mn(2+) site. Lysine 276 is a catalytic residue. Aspartate 287, aspartate 346, and glutamate 348 together coordinate Mn(2+). Residue arginine 350 is part of the active site.

The protein belongs to the peptidase M17 family. Requires Mn(2+) as cofactor.

The protein localises to the cytoplasm. It catalyses the reaction Release of an N-terminal amino acid, Xaa-|-Yaa-, in which Xaa is preferably Leu, but may be other amino acids including Pro although not Arg or Lys, and Yaa may be Pro. Amino acid amides and methyl esters are also readily hydrolyzed, but rates on arylamides are exceedingly low.. The catalysed reaction is Release of an N-terminal amino acid, preferentially leucine, but not glutamic or aspartic acids.. Its function is as follows. Presumably involved in the processing and regular turnover of intracellular proteins. Catalyzes the removal of unsubstituted N-terminal amino acids from various peptides. In Geotalea uraniireducens (strain Rf4) (Geobacter uraniireducens), this protein is Probable cytosol aminopeptidase.